Reading from the N-terminus, the 146-residue chain is Cystatin-C (146 aa).

A signal peptide spans 1–26 (MAGPLRAPLLLLAILAVALAVSPAAG). Position 43 is a phosphoserine (Ser43). Positions 81–85 (QIVAG) match the Secondary area of contact motif. 2 cysteine pairs are disulfide-bonded: Cys99/Cys109 and Cys123/Cys143.

It belongs to the cystatin family.

It localises to the secreted. As an inhibitor of cysteine proteinases, this protein is thought to serve an important physiological role as a local regulator of this enzyme activity. The chain is Cystatin-C (CST3) from Macaca mulatta (Rhesus macaque).